We begin with the raw amino-acid sequence, 235 residues long: Regulator of G-protein signaling 18 (235 aa).

S49 is subject to Phosphoserine. Residues 86–202 (SFDKLLSHRD…LKSETYLHLI (117 aa)) form the RGS domain. 2 positions are modified to phosphoserine: S216 and S218.

In terms of tissue distribution, expressed in bone marrow, spleen, fetal liver and lung. At very low levels expressed in heart.

Its subcellular location is the cytoplasm. Functionally, inhibits signal transduction by increasing the GTPase activity of G protein alpha subunits thereby driving them into their inactive GDP-bound form. Binds to G(i) alpha-1, G(i) alpha-2, G(i) alpha-3 and G(q) alpha. The polypeptide is Regulator of G-protein signaling 18 (Rgs18) (Mus musculus (Mouse)).